Reading from the N-terminus, the 497-residue chain is Casein kinase I isoform delta (497 aa).

Disordered stretches follow at residues 1-58 (MATM…EEMN) and 86-109 (PIQQ…HPTQ). The span at 14–34 (WHNNTSTPMDTTEPATNSHNP) shows a compositional bias: polar residues. Residues 88-105 (QQHQQPPLLQQAQPSQIP) show a composition bias toward low complexity. One can recognise a Protein kinase domain in the interval 191–458 (FRLGRKIGSG…YLRNLFRTLF (268 aa)). Residues 197–205 (IGSGSFGDI) and K220 each bind ATP. Residue D310 is the Proton acceptor of the active site.

Belongs to the protein kinase superfamily. CK1 Ser/Thr protein kinase family. Casein kinase I subfamily. Monomer. In terms of tissue distribution, expressed throughout larval development and into the adult stage in both hypodermal seam cells and the hermaphrodite specific neuron.

The protein resides in the cytoplasm. It localises to the nucleus. The protein localises to the chromosome. It is found in the centromere. Its subcellular location is the cell junction. The protein resides in the adherens junction. It carries out the reaction L-seryl-[protein] + ATP = O-phospho-L-seryl-[protein] + ADP + H(+). It catalyses the reaction L-threonyl-[protein] + ATP = O-phospho-L-threonyl-[protein] + ADP + H(+). Exhibits substrate-dependent heparin activation. Essential serine/threonine-protein kinase that regulates diverse cellular growth and survival processes including Wnt signaling, DNA repair and circadian rhythms. Casein kinases are operationally defined by their preferential utilization of acidic proteins. Positively regulates the expression of components of the heterochronic pathway, which regulate developmental timing, such as the transcriptional repressor lin-42 and microRNAs such as let-7. Negatively regulates cell cycle exit and cell fusion to prevent the premature differentiation of hypodermal seam cells into adult cells. Plays a role in regulating axon branching and subsequently, the maturation of the nervous system, most likely by preventing the premature termination of transcripts for proteins such as Ankyrin/unc-44, which are required for maintaining the nervous system. May phosphorylate ssup-72 to promote nervous system maturation. The chain is Casein kinase I isoform delta from Caenorhabditis elegans.